The sequence spans 506 residues: Vinckepain-1 (506 aa).

Over 1–32 (MSDNIGQINFTIPGIQSLDENDTYLKINHKKT) the chain is Cytoplasmic. The propeptide at 1–262 (MSDNIGQINF…LISVDNKSKD (262 aa)) is activation peptide. A helical; Signal-anchor for type II membrane protein membrane pass occupies residues 33–53 (IKICAYAITAIALFFIGGVFF). Over 54-506 (KNQAKINALD…VGSDVFFPIY (453 aa)) the chain is Lumenal. Asn133 and Asn258 each carry an N-linked (GlcNAc...) asparagine glycan. Cystine bridges form between Cys284–Cys326, Cys319–Cys359, Cys344–Cys364, and Cys413–Cys495. Cys287 is a catalytic residue. N-linked (GlcNAc...) asparagine glycosylation occurs at Asn418. Catalysis depends on residues His419 and Asn470.

Belongs to the peptidase C1 family.

It localises to the membrane. Cysteine protease. This chain is Vinckepain-1, found in Plasmodium vinckei.